The chain runs to 348 residues: Alternative squalene epoxidase (348 aa).

Positions 1-10 are enriched in basic and acidic residues; that stretch reads MLVDRVENNE. The disordered stretch occupies residues 1 to 26; it reads MLVDRVENNEKQQQQMASSSDAMSDS. Positions 12-26 are enriched in low complexity; the sequence is QQQQMASSSDAMSDS. Helical transmembrane passes span 55–75, 105–125, and 153–173; these read AIAW…LLLS, LGLV…WIFF, and GLLT…YLAI. The Fatty acid hydroxylase domain occupies 197-332; sequence FMCLVLQDGI…FMWFDQLGGT (136 aa). The Histidine box-1 motif lies at 211-215; that stretch reads HVLEH. A Histidine box-2 motif is present at residues 226–230; sequence HKPHH. 2 helical membrane passes run 243 to 263 and 277 to 297; these read GSLM…ANLV and SYAC…DGIF. The Histidine box-3 signature appears at 308–312; the sequence is HHVHH.

This sequence belongs to the sterol desaturase family. Interacts with cytochrome b5/PHATRDRAFT_30770. Fe cation serves as cofactor.

It is found in the endoplasmic reticulum membrane. The catalysed reaction is squalene + 2 Fe(II)-[cytochrome b5] + O2 + 2 H(+) = (S)-2,3-epoxysqualene + 2 Fe(III)-[cytochrome b5] + H2O. It functions in the pathway terpene metabolism; lanosterol biosynthesis; lanosterol from farnesyl diphosphate. Its activity is regulated as follows. The activity of this enzyme is not inhibited by terbinafine, an established inhibitor of the conventional flavoprotein squalene epoxidase. Catalyzes the stereospecific epoxidation of squalene at the terminal double bond to form (S)-2,3-epoxysqualene, the first oxygenation step in sterol biosynthesis. This is Alternative squalene epoxidase from Phaeodactylum tricornutum (strain CCAP 1055/1).